The following is a 549-amino-acid chain: MEADFVIIGSGSAGSAMAYRLSEDGRYSVIVIEYGVPDVGPLIQMPAALSFPMNMETYDWGFSSEPEPHIGGRSLVTPRGKVLGGSSSINGMVYVRGHACDFDHWSQSGARGWAYADVLPYFKRMENSQGGQEGWRGTNGPLYVQRGKRDNPLFHAFVEAGHQAGFEVTDDYNGEKQEGFGPMEQTIHNGRRWSAANAYLKPALKRPNVKLVKGFARKIVLEGKRAVGVEIEAGRTFSTIRARREVIIAASSINSPKLLMLSGIGPAAHLKEHGIDLVADRPGVGQNLQDHLEVYIQQECTQPITLYSKLNLFSKARIGVEWLLFKTGDGATNHFESAAFVRSKAGVEYPDIQYHFLPVAIRYDGKAAAQSHGFQAHVGPMRSKSRGSVTLRSANPREKPVIKFNYMSHEDDWADFRHCVRLTREIFGQAAFDPYRGAEIQPGAHVQTDDEIDNFIREHVESAFHPCGTCKMGAVDDPMAVVDPECRVIGVEGLRVADSSIFPRITNGNLNGPSIMVGEKASDHILGRTPLARSNQEPWINPRWQVSDR.

4–33 (DFVIIGSGSAGSAMAYRLSEDGRYSVIVIE) provides a ligand contact to FAD. The active-site Proton acceptor is His-465.

Belongs to the GMC oxidoreductase family. It depends on FAD as a cofactor.

The enzyme catalyses choline + A = betaine aldehyde + AH2. The catalysed reaction is betaine aldehyde + NAD(+) + H2O = glycine betaine + NADH + 2 H(+). Its pathway is amine and polyamine biosynthesis; betaine biosynthesis via choline pathway; betaine aldehyde from choline (cytochrome c reductase route): step 1/1. Involved in the biosynthesis of the osmoprotectant glycine betaine. Catalyzes the oxidation of choline to betaine aldehyde and betaine aldehyde to glycine betaine at the same rate. This is Oxygen-dependent choline dehydrogenase from Brucella ovis (strain ATCC 25840 / 63/290 / NCTC 10512).